A 108-amino-acid polypeptide reads, in one-letter code: uncharacterized protein (108 aa).

Helical transmembrane passes span tyrosine 32 to isoleucine 52 and serine 68 to glycine 88.

The protein resides in the membrane. This is an uncharacterized protein from Saccharomyces cerevisiae (strain ATCC 204508 / S288c) (Baker's yeast).